A 774-amino-acid chain; its full sequence is Cilium assembly protein DZIP1L (774 aa).

The segment at 166–189 (HTCHLCDKTFMNATFLRGHIQRRH) adopts a C2H2-type zinc-finger fold. A coiled-coil region spans residues 204–450 (LGEVLEELRA…RKVLAALRKN (247 aa)). Disordered regions lie at residues 415-435 (MPKAVATEEDSSEEELEASLE), 515-674 (NKEV…ASSG), and 686-774 (KQLE…IPGW). A compositionally biased stretch (acidic residues) spans 421–433 (TEEDSSEEELEAS). 2 positions are modified to phosphoserine: Ser-425 and Ser-426. The segment covering 515 to 526 (NKEVSSRVKQRW) has biased composition (basic and acidic residues). Positions 597–616 (GPSSTPVSPGSGLSSTPPFS) are enriched in low complexity.

Belongs to the DZIP C2H2-type zinc-finger protein family. In terms of assembly, interacts with SEPTIN2.

Its subcellular location is the cytoplasm. It localises to the cytoskeleton. It is found in the cilium basal body. The protein resides in the microtubule organizing center. The protein localises to the centrosome. Its subcellular location is the centriole. In terms of biological role, involved in primary cilium formation. Probably acts as a transition zone protein required for localization of PKD1/PC1 and PKD2/PC2 to the ciliary membrane. This is Cilium assembly protein DZIP1L from Mus musculus (Mouse).